The primary structure comprises 480 residues: Krueppel-like factor 10 (480 aa).

Residues 1–12 (MLNFGASLQQAS) show a composition bias toward polar residues. Disordered regions lie at residues 1–32 (MLNFGASLQQASEGKMELISEKSKEGAHPWDK), 64–83 (VTPVSDTSEEDSLLPGTPDL), and 97–146 (PSDF…APPL). The segment covering 14 to 32 (GKMELISEKSKEGAHPWDK) has biased composition (basic and acidic residues). The residue at position 183 (Ser-183) is a Phosphoserine. The disordered stretch occupies residues 202 to 222 (AAVSPNRPKPEPSTAANGAEK). Ser-249 bears the Phosphoserine mark. 3 consecutive C2H2-type zinc fingers follow at residues 369-393 (HICSHPGCGKTYFKSSHLKAHVRTH), 399-423 (FSCSWKGCERRFARSDELSRHRRTH), and 429-451 (FACPMCDRRFMRSDHLTKHARRH).

It belongs to the Sp1 C2H2-type zinc-finger protein family. Ubiquitinated; mediated by SIAH1 and leading to its subsequent proteasomal degradation.

The protein localises to the nucleus. Its function is as follows. Transcriptional repressor which binds to the consensus sequence 5'-GGTGTG-3'. Regulates the circadian expression of genes involved in lipogenesis, gluconeogenesis, and glycolysis in the liver. Represses the expression of PCK2, a rate-limiting step enzyme of gluconeogenesis. May play a role in the cell cycle regulation. Plays a role in the regulation of the circadian clock; binds to the GC box sequence in the promoter of the core clock component ARTNL/BMAL1 and represses its transcriptional activity. The protein is Krueppel-like factor 10 (Klf10) of Rattus norvegicus (Rat).